The following is a 474-amino-acid chain: Synaptotagmin-17 (474 aa).

Residues Pro54–Leu112 form a disordered region. A compositionally biased stretch (low complexity) spans Ser96 to Leu112. C2 domains are found at residues Gln184 to Lys310 and Glu321 to His455.

This sequence belongs to the synaptotagmin family.

It localises to the membrane. Functionally, may play a role in dendrite formation by melanocytes. The sequence is that of Synaptotagmin-17 (syt17) from Xenopus tropicalis (Western clawed frog).